Consider the following 309-residue polypeptide: Tumor necrosis factor ligand superfamily member 13B (309 aa).

At 1-47 (MDESAKTLPPPCLCFCSEKGEDMKVGYDPITPQKEEGAWFGICRDGR) the chain is on the cytoplasmic side. Residues 48 to 68 (LLAATLLLALLSSSFTAMSLY) form a helical; Signal-anchor for type II membrane protein membrane-spanning segment. Residues 69-309 (QLAALQADLM…DTFFGALKLL (241 aa)) are Extracellular-facing. Residues 110-140 (PAAPRPHNSSRGHRNRRAFQGPEETEQDVDL) are disordered. 2 N-linked (GlcNAc...) asparagine glycosylation sites follow: Asn-117 and Asn-266. A compositionally biased stretch (basic residues) spans 117 to 126 (NSSRGHRNRR). The region spanning 169 to 308 (DCLQLIADSD…DDTFFGALKL (140 aa)) is the THD domain. Cysteines 256 and 269 form a disulfide.

The protein belongs to the tumor necrosis factor family. Homotrimer. Isoform 2 heteromultimerizes with isoform 1, probably limiting the amount of functional isoform 1 on the cell surface. In terms of processing, the soluble form derives from the membrane form by proteolytic processing. Isoform 2 is not efficiently shed from the membrane unlike isoform 1. In terms of tissue distribution, isoform 2 is expressed in many myeloid cell lines.

The protein localises to the cell membrane. The protein resides in the secreted. In terms of biological role, cytokine that binds to TNFRSF13B/TACI and TNFRSF17/BCMA. TNFSF13/APRIL binds to the same 2 receptors. Together, they form a 2 ligands -2 receptors pathway involved in the stimulation of B- and T-cell function and the regulation of humoral immunity. A third B-cell specific BAFF-receptor (BAFFR/BR3) promotes the survival of mature B-cells and the B-cell response. Functionally, isoform 2 seems to inhibit isoform 1 secretion and bioactivity. The polypeptide is Tumor necrosis factor ligand superfamily member 13B (Tnfsf13b) (Mus musculus (Mouse)).